Reading from the N-terminus, the 184-residue chain is Tumor necrosis factor receptor superfamily member 13C (184 aa).

The Extracellular segment spans residues 1-78 (MRRGPRSLRG…EAALPLPGLL (78 aa)). One copy of the TNFR-Cys; truncated repeat lies at 18 to 35 (PCVPAECFDLLVRHCVAC). 2 disulfide bridges follow: Cys19–Cys32 and Cys24–Cys35. Residues 26–31 (DLLVRH) are essential for TNFSF13B/TALL1/BAFF/BLyS binding. The interval 43–62 (PKPAGASSPAPRTALQPQES) is disordered. A helical; Signal-anchor for type III membrane protein transmembrane segment spans residues 79–99 (FGAPALLGLALVLALVLVGLV). Topologically, residues 100–184 (SWRRRQRRLR…TTKTAGPEQQ (85 aa)) are cytoplasmic. Residues 107–184 (RLRGASSAEA…TTKTAGPEQQ (78 aa)) are disordered. A compositionally biased stretch (basic and acidic residues) spans 118 to 128 (DGDKDAPEPLD). Residues 168 to 184 (LGSTELVTTKTAGPEQQ) show a composition bias toward polar residues.

In terms of tissue distribution, highly expressed in spleen and lymph node, and in resting B-cells. Detected at lower levels in activated B-cells, resting CD4+ T-cells, in thymus and peripheral blood leukocytes.

Its subcellular location is the membrane. Functionally, B-cell receptor specific for TNFSF13B/TALL1/BAFF/BLyS. Promotes the survival of mature B-cells and the B-cell response. The protein is Tumor necrosis factor receptor superfamily member 13C (TNFRSF13C) of Homo sapiens (Human).